A 301-amino-acid polypeptide reads, in one-letter code: MSEPFKSGFVAIVGRPNVGKSTLLNHIIGQKIAIMSDKAQTTRNKVQGVYTTDESQIIFIDTPGIHKPKHKLGDFMVKIALNTFQEVDLIYFVIDASTGFGRGDEFIIEKLKNVQTPVFLLINKIDLIAPEDLFKLIEQYRDLMDFDEIIPISALQGNNVPNLLEQTNANLEIGPMYYPKDQITDHPERFIISELIREQVLQLTREEVPHSVAVVIEGIEKNPKTEKLTINATIIVERSTQKGIIIGKQGQMLKQIGMRARKEIERLLGSKVFLEIWVKVQKNWRDKEHYLQDYGFDREEY.

The region spanning 6–173 (KSGFVAIVGR…LEQTNANLEI (168 aa)) is the Era-type G domain. Residues 14-21 (GRPNVGKS) form a G1 region. Residue 14–21 (GRPNVGKS) coordinates GTP. The segment at 40–44 (QTTRN) is G2. The segment at 61-64 (DTPG) is G3. Residues 61 to 65 (DTPGI) and 123 to 126 (NKID) contribute to the GTP site. The G4 stretch occupies residues 123–126 (NKID). Residues 152–154 (ISA) are G5. Positions 204–282 (TREEVPHSVA…FLEIWVKVQK (79 aa)) constitute a KH type-2 domain.

It belongs to the TRAFAC class TrmE-Era-EngA-EngB-Septin-like GTPase superfamily. Era GTPase family. Monomer.

Its subcellular location is the cytoplasm. The protein localises to the cell membrane. Functionally, an essential GTPase that binds both GDP and GTP, with rapid nucleotide exchange. Plays a role in 16S rRNA processing and 30S ribosomal subunit biogenesis and possibly also in cell cycle regulation and energy metabolism. The protein is GTPase Era of Listeria monocytogenes serotype 4b (strain F2365).